Consider the following 494-residue polypeptide: Inosine-5'-monophosphate dehydrogenase (494 aa).

CBS domains follow at residues 93–154 (IIRN…DEKI) and 158–217 (MTTN…CKDS). NAD(+)-binding positions include D251 and 301–303 (GIG). K(+)-binding residues include G303 and G305. S306 lines the IMP pocket. Position 308 (C308) interacts with K(+). C308 acts as the Thioimidate intermediate in catalysis. IMP-binding positions include 341–343 (DGG), 364–365 (GS), and 388–392 (YRGMG). The active-site Proton acceptor is R406. E421 serves as a coordination point for IMP. Residues E475, S476, and H477 each coordinate K(+).

This sequence belongs to the IMPDH/GMPR family. In terms of assembly, homotetramer. The cofactor is K(+).

It catalyses the reaction IMP + NAD(+) + H2O = XMP + NADH + H(+). The protein operates within purine metabolism; XMP biosynthesis via de novo pathway; XMP from IMP: step 1/1. With respect to regulation, mycophenolic acid (MPA) is a non-competitive inhibitor that prevents formation of the closed enzyme conformation by binding to the same site as the amobile flap. In contrast, mizoribine monophosphate (MZP) is a competitive inhibitor that induces the closed conformation. MPA is a potent inhibitor of mammalian IMPDHs but a poor inhibitor of the bacterial enzymes. MZP is a more potent inhibitor of bacterial IMPDH. Catalyzes the conversion of inosine 5'-phosphate (IMP) to xanthosine 5'-phosphate (XMP), the first committed and rate-limiting step in the de novo synthesis of guanine nucleotides, and therefore plays an important role in the regulation of cell growth. This chain is Inosine-5'-monophosphate dehydrogenase, found in Chlorobaculum tepidum (strain ATCC 49652 / DSM 12025 / NBRC 103806 / TLS) (Chlorobium tepidum).